The sequence spans 91 residues: Small ribosomal subunit protein uS17 (91 aa).

This sequence belongs to the universal ribosomal protein uS17 family. In terms of assembly, part of the 30S ribosomal subunit.

Its function is as follows. One of the primary rRNA binding proteins, it binds specifically to the 5'-end of 16S ribosomal RNA. This chain is Small ribosomal subunit protein uS17, found in Acidithiobacillus ferrooxidans (strain ATCC 23270 / DSM 14882 / CIP 104768 / NCIMB 8455) (Ferrobacillus ferrooxidans (strain ATCC 23270)).